A 355-amino-acid chain; its full sequence is MEPHLLGLLLGLLLGGTRVLAGYPIWWSLALGQQYTSLGSQPLLCGSIPGLVPKQLRFCRNYIEIMPSVAEGVKLGIQECQHQFRGRRWNCTTIDDSLAIFGPVLDKATRESAFVHAIASAGVAFAVTRSCAEGTSTICGCDSHHKGPPGEGWKWGGCSEDADFGVLVSREFADARENRPDARSAMNKHNNEAGRTTILDHMHLKCKCHGLSGSCEVKTCWWAQPDFRAIGDFLKDKYDSASEMVVEKHRESRGWVETLRAKYSLFKPPTERDLVYYENSPNFCEPNPETGSFGTRDRTCNVTSHGIDGCDLLCCGRGHNTRTEKRKEKCHCIFHWCCYVSCQECIRIYDVHTCK.

Residues 1–21 (MEPHLLGLLLGLLLGGTRVLA) form the signal peptide. 11 cysteine pairs are disulfide-bonded: Cys-80-Cys-91, Cys-131-Cys-139, Cys-141-Cys-158, Cys-206-Cys-220, Cys-208-Cys-215, Cys-284-Cys-315, Cys-300-Cys-310, Cys-314-Cys-354, Cys-330-Cys-345, Cys-332-Cys-342, and Cys-337-Cys-338. Asn-90 is a glycosylation site (N-linked (GlcNAc...) asparagine). A lipid anchor (O-palmitoleoyl serine; by PORCN) is attached at Ser-212. Residue Asn-301 is glycosylated (N-linked (GlcNAc...) asparagine).

The protein belongs to the Wnt family. In terms of assembly, forms a soluble 1:1 complex with AFM; this prevents oligomerization and is required for prolonged biological activity. The complex with AFM may represent the physiological form in body fluids. Interacts with PORCN. Interacts with WLS. Post-translationally, palmitoleoylation is required for efficient binding to frizzled receptors. Depalmitoleoylation leads to Wnt signaling pathway inhibition.

The protein localises to the secreted. Its subcellular location is the extracellular space. The protein resides in the extracellular matrix. In terms of biological role, ligand for members of the frizzled family of seven transmembrane receptors. Functions in the canonical Wnt signaling pathway that results in activation of transcription factors of the TCF/LEF family. Required for normal gastrulation, formation of the primitive streak, and for the formation of the mesoderm during early embryogenesis. Required for normal formation of the apical ectodermal ridge. Required for normal embryonic development, and especially for limb development. This chain is Proto-oncogene Wnt-3 (WNT3), found in Homo sapiens (Human).